Here is a 352-residue protein sequence, read N- to C-terminus: Glycerol-3-phosphate dehydrogenase 1-like protein (352 aa).

Residue 13 to 18 (GSGNWG) coordinates NAD(+). Position 123 (lysine 123) interacts with substrate. Residue alanine 156 coordinates NAD(+). Lysine 207 serves as the catalytic Proton acceptor. 3 residues coordinate NAD(+): arginine 272, lysine 299, and glutamine 301. Substrate is bound at residue 272-273 (RN).

This sequence belongs to the NAD-dependent glycerol-3-phosphate dehydrogenase family.

It is found in the cytoplasm. It catalyses the reaction sn-glycerol 3-phosphate + NAD(+) = dihydroxyacetone phosphate + NADH + H(+). Its function is as follows. Plays a role in regulating cardiac sodium current. The protein is Glycerol-3-phosphate dehydrogenase 1-like protein (gpd1l) of Xenopus tropicalis (Western clawed frog).